The primary structure comprises 273 residues: MEDSKISVLIADDNKEFCSILNDYLLNQKDIVVTGIAKDGREALELIVERKPDLVILDIIMPHLDGLGVLEKLNTMQLEKVPRIIILSAVGQDKITQQAITLGADYYTVKPFDMEVFTKRIREMFNSSAAVQETNMRNSYASSMISTPSENKTKAPIDLETEITNIIHEVGVPAHIKGYMYLREAITMVVNDMELLSAVTKELYPSIAKKYNTTASRVERAIRHAIEVAWGRGQIEAINRLFGYTVHNDKGKPTNSEFIAIIADKLRLKNKVS.

The Response regulatory domain occupies 7–125; it reads SVLIADDNKE…VFTKRIREMF (119 aa). Ca(2+) contacts are provided by Asp12, Asp13, and Asp58. The residue at position 58 (Asp58) is a 4-aspartylphosphate. The H-T-H motif DNA-binding region spans 205–224; it reads PSIAKKYNTTASRVERAIRH.

The cofactor is Ca(2+).

The protein localises to the cytoplasm. Functionally, may play the central regulatory role in sporulation. It may be an element of the effector pathway responsible for the activation of sporulation genes in response to nutritional stress. Spo0A may act in concert with spo0H (a sigma factor) to control the expression of some genes that are critical to the sporulation process. The protein is Stage 0 sporulation protein A homolog (spo0A) of Clostridium beijerinckii (strain ATCC 51743 / NCIMB 8052) (Clostridium acetobutylicum).